The sequence spans 335 residues: MEKINAVITGVGGYVPDYILTNEEISKMVDTNDEWIMTRIGVKERHILNEEGLGSSYMARKAAKQLMKKTGANPDDIDLVIVATTTPDYHFPSTASILCDKLGLKNAFAFDLQAACCGFLYLMETAANFIRSGRYKKIIIVGADKMSSMVNYTDRATCPIFGDGAAAFMMEPTTEDLGVMDSILRTDGKGLPFLHMKAGGSVCPPSYFTVDNKMHYLHQEGRTVFKYAVSSMSDVSAAIAEKNGLTKDTINWVVPHQANVRIIEAVAHRMELPMDKVLVNIEHYGNTSAATLPLCIWDFEDKLKKGDNIIFTAFGAGFTWGAVYVKWGYDGKKES.

Active-site residues include Cys116 and His256. The ACP-binding stretch occupies residues 257-261; sequence QANVR. Asn286 is a catalytic residue.

Belongs to the thiolase-like superfamily. FabH family. In terms of assembly, homodimer.

The protein resides in the cytoplasm. The catalysed reaction is malonyl-[ACP] + acetyl-CoA + H(+) = 3-oxobutanoyl-[ACP] + CO2 + CoA. The protein operates within lipid metabolism; fatty acid biosynthesis. In terms of biological role, catalyzes the condensation reaction of fatty acid synthesis by the addition to an acyl acceptor of two carbons from malonyl-ACP. Catalyzes the first condensation reaction which initiates fatty acid synthesis and may therefore play a role in governing the total rate of fatty acid production. Possesses both acetoacetyl-ACP synthase and acetyl transacylase activities. Its substrate specificity determines the biosynthesis of branched-chain and/or straight-chain of fatty acids. This chain is Beta-ketoacyl-[acyl-carrier-protein] synthase III 2, found in Bacteroides thetaiotaomicron (strain ATCC 29148 / DSM 2079 / JCM 5827 / CCUG 10774 / NCTC 10582 / VPI-5482 / E50).